Here is a 556-residue protein sequence, read N- to C-terminus: Beta-caryophyllene synthase TPS9FN (556 aa).

(2E,6E)-farnesyl diphosphate-binding residues include arginine 273, aspartate 310, aspartate 314, arginine 451, and aspartate 454. Mg(2+) is bound by residues aspartate 310 and aspartate 314. The short motif at aspartate 310–aspartate 314 is the DDXXD motif element. The Mg(2+) site is built by aspartate 454, serine 458, and glutamate 462.

It belongs to the terpene synthase family. Tpsb subfamily. It depends on Mg(2+) as a cofactor. Mn(2+) is required as a cofactor. Expressed in glandular trichomes two to four weeks after flowering onset.

It carries out the reaction (2E,6E)-farnesyl diphosphate = (-)-(E)-beta-caryophyllene + diphosphate. The enzyme catalyses (2E,6E)-farnesyl diphosphate = alpha-humulene + diphosphate. It functions in the pathway secondary metabolite biosynthesis; terpenoid biosynthesis. Functionally, involved in sesquiterpene olefins biosynthesis, constituants of cannabinoids and terpenoids-rich resins. Catalyzes mainly the conversion of (2E)-farnesyl diphosphate to beta-caryophyllene and alpha-humulene. Can also use (2E)-geranyl diphosphate as substrate with low efficiency. The protein is Beta-caryophyllene synthase TPS9FN of Cannabis sativa (Hemp).